We begin with the raw amino-acid sequence, 538 residues long: Phosphoenolpyruvate carboxykinase (ATP) (538 aa).

Positions 64, 205, and 211 each coordinate substrate. Residues Lys211, His230, and 246–254 (GLSGTGKTT) each bind ATP. Residues Lys211 and His230 each coordinate Mn(2+). Asp267 provides a ligand contact to Mn(2+). Residues Glu295, Arg331, 447-448 (RI), and Thr453 each bind ATP. Substrate is bound at residue Arg331.

It belongs to the phosphoenolpyruvate carboxykinase (ATP) family. In terms of assembly, monomer. It depends on Mn(2+) as a cofactor.

The protein localises to the cytoplasm. The enzyme catalyses oxaloacetate + ATP = phosphoenolpyruvate + ADP + CO2. Its pathway is carbohydrate biosynthesis; gluconeogenesis. Involved in the gluconeogenesis. Catalyzes the conversion of oxaloacetate (OAA) to phosphoenolpyruvate (PEP) through direct phosphoryl transfer between the nucleoside triphosphate and OAA. This is Phosphoenolpyruvate carboxykinase (ATP) from Haemophilus influenzae (strain PittEE).